A 1072-amino-acid chain; its full sequence is Integrin alpha-6 (1072 aa).

The signal sequence occupies residues 1 to 18 (MAAALLLYLPLLPGLAGA). Residues 19–1010 (FNLDAENVIG…FPAKPVALYT (992 aa)) are Extracellular-facing. FG-GAP repeat units follow at residues 23-88 (AENV…DTRC), 94-160 (DEDT…IKDD), 170-223 (DGRL…FYDL), 238-295 (RQDK…QRAL), 296-357 (SLEH…KWEG), 358-413 (IKPI…GINT), and 414-476 (EPAQ…VQPD). Asparagine 71 is a glycosylation site (N-linked (GlcNAc...) asparagine). 3 cysteine pairs are disulfide-bonded: cysteine 79-cysteine 88, cysteine 125-cysteine 148, and cysteine 169-cysteine 182. N-linked (GlcNAc...) asparagine glycans are attached at residues asparagine 217 and asparagine 278. Residues aspartate 318, asparagine 320, aspartate 322, and aspartate 326 each coordinate Ca(2+). An N-linked (GlcNAc...) asparagine glycan is attached at asparagine 364. Aspartate 380, asparagine 382, aspartate 384, tyrosine 386, aspartate 388, aspartate 438, aspartate 440, asparagine 442, tyrosine 444, and aspartate 446 together coordinate Ca(2+). An intrachain disulfide couples cysteine 498 to cysteine 557. Asparagine 515 and asparagine 609 each carry an N-linked (GlcNAc...) asparagine glycan. Intrachain disulfides connect cysteine 625-cysteine 631 and cysteine 725-cysteine 736. N-linked (GlcNAc...) asparagine glycans are attached at residues asparagine 730, asparagine 747, and asparagine 780. Disulfide bonds link cysteine 880–cysteine 927 and cysteine 933–cysteine 938. Residue asparagine 957 is glycosylated (N-linked (GlcNAc...) asparagine). A helical membrane pass occupies residues 1011-1036 (GVPWWIIAVAIFAGVLMLALLVFLLW). The Cytoplasmic portion of the chain corresponds to 1037-1072 (KCGFFKRSKKDHYDATYHKAEIHAQPSDKERLTSDA). Cysteine 1038 carries S-palmitoyl cysteine; by DHHC3 lipidation. Residues 1039–1043 (GFFKR) carry the GFFKR motif motif. Position 1070 is a phosphoserine; by CaMK2 (serine 1070).

It belongs to the integrin alpha chain family. As to quaternary structure, heterodimer of an alpha and a beta subunit. The alpha subunit is composed of a heavy and a light chain linked by a disulfide bond. Alpha-6 associates with either beta-1 (ITGB1) or beta-4 (ITGB4) to form ITGA6:ITGB1 and ITGA6:ITGB4, respectively. In terms of processing, phosphorylated in vivo.

The protein resides in the cell membrane. In terms of biological role, integrin alpha-6/beta-1 (ITGA6:ITGB1) is a receptor for laminin on platelets. Integrin alpha-6/beta-1 (ITGA6:ITGB1) is present in oocytes and is involved in sperm-egg fusion. Integrin alpha-6/beta-4 (ITGA6:ITGB4) is a receptor for laminin in epithelial cells and it plays a critical structural role in the hemidesmosome. The polypeptide is Integrin alpha-6 (ITGA6) (Gallus gallus (Chicken)).